Reading from the N-terminus, the 1097-residue chain is DNA-directed RNA polymerase subunit beta (1097 aa).

The protein belongs to the RNA polymerase beta chain family. In plastids the minimal PEP RNA polymerase catalytic core is composed of four subunits: alpha, beta, beta', and beta''. When a (nuclear-encoded) sigma factor is associated with the core the holoenzyme is formed, which can initiate transcription.

Its subcellular location is the plastid. The protein resides in the chloroplast. The catalysed reaction is RNA(n) + a ribonucleoside 5'-triphosphate = RNA(n+1) + diphosphate. In terms of biological role, DNA-dependent RNA polymerase catalyzes the transcription of DNA into RNA using the four ribonucleoside triphosphates as substrates. This is DNA-directed RNA polymerase subunit beta from Rhodomonas salina (Cryptomonas salina).